The primary structure comprises 72 residues: DNA-directed RNA polymerase subunit omega (72 aa).

The protein belongs to the RNA polymerase subunit omega family. The RNAP catalytic core consists of 2 alpha, 1 beta, 1 beta' and 1 omega subunit. When a sigma factor is associated with the core the holoenzyme is formed, which can initiate transcription.

It catalyses the reaction RNA(n) + a ribonucleoside 5'-triphosphate = RNA(n+1) + diphosphate. In terms of biological role, promotes RNA polymerase assembly. Latches the N- and C-terminal regions of the beta' subunit thereby facilitating its interaction with the beta and alpha subunits. The protein is DNA-directed RNA polymerase subunit omega of Clostridium botulinum (strain Loch Maree / Type A3).